The primary structure comprises 295 residues: Cytidine deaminase (295 aa).

CMP/dCMP-type deaminase domains follow at residues 48 to 168 (TDNQ…FGPS) and 187 to 295 (EDDD…YLSL). Substrate is bound at residue 89 to 91 (NME). Zn(2+) is bound at residue His102. The active-site Proton donor is the Glu104. Zn(2+) contacts are provided by Cys129 and Cys132.

The protein belongs to the cytidine and deoxycytidylate deaminase family. Homodimer. Requires Zn(2+) as cofactor.

It catalyses the reaction cytidine + H2O + H(+) = uridine + NH4(+). It carries out the reaction 2'-deoxycytidine + H2O + H(+) = 2'-deoxyuridine + NH4(+). Its function is as follows. This enzyme scavenges exogenous and endogenous cytidine and 2'-deoxycytidine for UMP synthesis. The protein is Cytidine deaminase of Vibrio vulnificus (strain CMCP6).